The sequence spans 401 residues: Nicotinate phosphoribosyltransferase (401 aa).

Histidine 224 bears the Phosphohistidine; by autocatalysis mark.

It belongs to the NAPRTase family. In terms of processing, transiently phosphorylated on a His residue during the reaction cycle. Phosphorylation strongly increases the affinity for substrates and increases the rate of nicotinate D-ribonucleotide production. Dephosphorylation regenerates the low-affinity form of the enzyme, leading to product release.

The enzyme catalyses nicotinate + 5-phospho-alpha-D-ribose 1-diphosphate + ATP + H2O = nicotinate beta-D-ribonucleotide + ADP + phosphate + diphosphate. Its pathway is cofactor biosynthesis; NAD(+) biosynthesis; nicotinate D-ribonucleotide from nicotinate: step 1/1. Its function is as follows. Catalyzes the synthesis of beta-nicotinate D-ribonucleotide from nicotinate and 5-phospho-D-ribose 1-phosphate at the expense of ATP. The chain is Nicotinate phosphoribosyltransferase from Pseudomonas putida (strain GB-1).